The sequence spans 415 residues: MKHLPAQDEQVFSAIQDERKRQQSKIELIASENFVSEAVMEAQGSVLTNKYAEGYPGKRYYGGCEHVDVAEDIARDRAKQIFGAEHVNVQPHSGAQANMAVYFTILEHGDTVLGMNLAHGGHLTHGSPVNFSGVQYNFVEYGVDKETQYIDYEDVREKALKHKPKLIVAGASAYPRTIDFKKFREIADEVGAYVMVDMAHIAGLVAAGLHPNPVPYADFVTTTTHKTLRGPRGGMILCREEFAKQIDKSIFPGIQGGPLMHVIAAKAVSFGEALKDEFKTYAQNVINNAKRLAETLKKEGIELVSGGTDNHLVLVDLRSLGITGKVAENVLDEVGITVNKNAIPYDPEKPFVTSGIRVGTAAVTSRGFDLEAIEEVGAIIALALKNHEDEAKLEEAKQRVEALTNRFPLYTGLDY.

(6S)-5,6,7,8-tetrahydrofolate contacts are provided by residues leucine 117 and 121 to 123 (GHL). Position 226 is an N6-(pyridoxal phosphate)lysine (lysine 226). Residue glutamate 241 participates in (6S)-5,6,7,8-tetrahydrofolate binding.

It belongs to the SHMT family. As to quaternary structure, homodimer. Requires pyridoxal 5'-phosphate as cofactor.

Its subcellular location is the cytoplasm. The enzyme catalyses (6R)-5,10-methylene-5,6,7,8-tetrahydrofolate + glycine + H2O = (6S)-5,6,7,8-tetrahydrofolate + L-serine. It functions in the pathway one-carbon metabolism; tetrahydrofolate interconversion. Its pathway is amino-acid biosynthesis; glycine biosynthesis; glycine from L-serine: step 1/1. Functionally, catalyzes the reversible interconversion of serine and glycine with tetrahydrofolate (THF) serving as the one-carbon carrier. This reaction serves as the major source of one-carbon groups required for the biosynthesis of purines, thymidylate, methionine, and other important biomolecules. Also exhibits THF-independent aldolase activity toward beta-hydroxyamino acids, producing glycine and aldehydes, via a retro-aldol mechanism. This chain is Serine hydroxymethyltransferase, found in Bacillus licheniformis (strain ATCC 14580 / DSM 13 / JCM 2505 / CCUG 7422 / NBRC 12200 / NCIMB 9375 / NCTC 10341 / NRRL NRS-1264 / Gibson 46).